Reading from the N-terminus, the 1859-residue chain is Protein TIC 214 (1859 aa).

A run of 6 helical transmembrane segments spans residues 18–38, 64–84, 87–107, 124–144, 172–192, and 221–241; these read IINS…FSIG, FITG…HLAL, PHTI…WNNH, LSIQ…HFIL, VGWL…LFWI, and IFSI…PAPI. Positions 247 to 314 are disordered; that stretch reads KETSKTEERG…TEEIRVNGKE (68 aa). Residues 256–268 are compositionally biased toward acidic residues; the sequence is GESEEERDVEIET. Over residues 273 to 284 the composition is skewed to basic and acidic residues; it reads KGTKQEQERSTE. Residues 295–306 show a composition bias toward acidic residues; that stretch reads EKEDPDKIDETE.

The protein belongs to the TIC214 family. As to quaternary structure, part of the Tic complex.

It localises to the plastid. It is found in the chloroplast inner membrane. In terms of biological role, involved in protein precursor import into chloroplasts. May be part of an intermediate translocation complex acting as a protein-conducting channel at the inner envelope. This chain is Protein TIC 214, found in Buxus microphylla (Littleleaf boxwood).